Here is a 204-residue protein sequence, read N- to C-terminus: UPF0215 protein MTH_1316 (204 aa).

Belongs to the UPF0215 family.

In Methanothermobacter thermautotrophicus (strain ATCC 29096 / DSM 1053 / JCM 10044 / NBRC 100330 / Delta H) (Methanobacterium thermoautotrophicum), this protein is UPF0215 protein MTH_1316.